Consider the following 41-residue polypeptide: Photosystem I reaction center subunit IX (41 aa).

The chain crosses the membrane as a helical span at residues 7–27; that stretch reads YLSTAPVLLTLWMTFTAGFII.

It belongs to the PsaJ family.

Its subcellular location is the plastid. The protein resides in the chloroplast thylakoid membrane. In terms of biological role, may help in the organization of the PsaE and PsaF subunits. The sequence is that of Photosystem I reaction center subunit IX from Thalassiosira pseudonana (Marine diatom).